Here is a 368-residue protein sequence, read N- to C-terminus: uncharacterized protein (368 aa).

Its function is as follows. Might be involved in sporulation. This is an uncharacterized protein from Brachyspira hyodysenteriae (strain ATCC 49526 / WA1).